We begin with the raw amino-acid sequence, 311 residues long: MALPILLDCDPGHDDAIAIVLALASPELDVKAITSSAGNQTPEKTLRNVLRMLTLLNRTDIPVAGGAVKPLMRELIIADNVHGESGLDGPALPEPTFAPQNCTAVELMAKTLRESAEPVTIVSTGPQTNVALLLNSHPELHSKIARIVIMGGAMGLGNWTPAAEFNIYVDPEAAEIVFQSGIPVVMAGLDVTHKAQIHVEDTERFRAIGNPVSTIVAELLDFFLEYHKDEKWGFVGAPLHDPCTIAWLLKPELFTTVERWVGVETQGKYTQGMTVVDYYYLTGNKPNASVMVDVDRQGFVDLLADRLKFYA.

His-240 is a catalytic residue.

It belongs to the IUNH family. RihA subfamily.

In terms of biological role, hydrolyzes with equal efficiency cytidine or uridine to ribose and cytosine or uracil, respectively. In Escherichia coli O17:K52:H18 (strain UMN026 / ExPEC), this protein is Pyrimidine-specific ribonucleoside hydrolase RihA.